Consider the following 302-residue polypeptide: Glutaminase (302 aa).

Residues Ser-61, Asn-111, Glu-155, Asn-162, Tyr-186, Tyr-238, and Val-256 each coordinate substrate.

It belongs to the glutaminase family. As to quaternary structure, homotetramer.

The enzyme catalyses L-glutamine + H2O = L-glutamate + NH4(+). This Pseudomonas aeruginosa (strain ATCC 15692 / DSM 22644 / CIP 104116 / JCM 14847 / LMG 12228 / 1C / PRS 101 / PAO1) protein is Glutaminase.